A 318-amino-acid polypeptide reads, in one-letter code: Protoheme IX farnesyltransferase (318 aa).

9 consecutive transmembrane segments (helical) span residues 37 to 57 (LVIF…HPVI), 58 to 78 (AFTA…LNMW), 100 to 120 (VTAR…VMTM), 122 to 142 (VLVN…YLVV), 155 to 175 (IVIG…AVTG), 182 to 202 (FVLF…LALY), 228 to 248 (IMLY…LGFA), 251 to 271 (LYMG…FGIW), and 291 to 311 (ILYL…GLGG).

Belongs to the UbiA prenyltransferase family. Protoheme IX farnesyltransferase subfamily.

The protein resides in the cell inner membrane. It carries out the reaction heme b + (2E,6E)-farnesyl diphosphate + H2O = Fe(II)-heme o + diphosphate. The protein operates within porphyrin-containing compound metabolism; heme O biosynthesis; heme O from protoheme: step 1/1. Functionally, converts heme B (protoheme IX) to heme O by substitution of the vinyl group on carbon 2 of heme B porphyrin ring with a hydroxyethyl farnesyl side group. This chain is Protoheme IX farnesyltransferase, found in Parvibaculum lavamentivorans (strain DS-1 / DSM 13023 / NCIMB 13966).